Reading from the N-terminus, the 89-residue chain is MRNNVERRMQRVNEACRLLSKDTEMRRITDQNRQSRESEGTSPNSGKDGKDHFELTLNVRDFSPHELTVKTQGRRVIVTGKHERKSDTE.

2 stretches are compositionally biased toward basic and acidic residues: residues 1–11 (MRNNVERRMQR) and 19–39 (LSKD…RESE). Positions 1–55 (MRNNVERRMQRVNEACRLLSKDTEMRRITDQNRQSRESEGTSPNSGKDGKDHFEL) are disordered. The 55-residue stretch at 35 to 89 (SRESEGTSPNSGKDGKDHFELTLNVRDFSPHELTVKTQGRRVIVTGKHERKSDTE) folds into the sHSP domain.

The protein belongs to the small heat shock protein (HSP20) family.

The sequence is that of Heat shock protein 30A (hsp30a) from Xenopus laevis (African clawed frog).